Here is a 726-residue protein sequence, read N- to C-terminus: Elongation factor 2 (726 aa).

The 242-residue stretch at 19–260 (DRIRNIGICA…MVIKHLPSPP (242 aa)) folds into the tr-type G domain. GTP contacts are provided by residues 28-35 (AHIDHGKT), 94-98 (DTPGH), and 148-151 (NKVD). Histidine 602 is modified (diphthamide).

It belongs to the TRAFAC class translation factor GTPase superfamily. Classic translation factor GTPase family. EF-G/EF-2 subfamily.

It is found in the cytoplasm. Functionally, catalyzes the GTP-dependent ribosomal translocation step during translation elongation. During this step, the ribosome changes from the pre-translocational (PRE) to the post-translocational (POST) state as the newly formed A-site-bound peptidyl-tRNA and P-site-bound deacylated tRNA move to the P and E sites, respectively. Catalyzes the coordinated movement of the two tRNA molecules, the mRNA and conformational changes in the ribosome. This chain is Elongation factor 2 (fusA), found in Methanocaldococcus jannaschii (strain ATCC 43067 / DSM 2661 / JAL-1 / JCM 10045 / NBRC 100440) (Methanococcus jannaschii).